The following is a 464-amino-acid chain: UNC93-like protein 3 (464 aa).

A run of 11 helical transmembrane segments spans residues 31–51 (VHIL…AQNL), 62–82 (ISLG…SLVV), 84–104 (LMGS…FVAA), 110–130 (WFTM…IWVG), 160–180 (EFWA…LALL), 192–212 (TLLM…MFFI), 251–271 (LLIV…WAEF), 275–295 (IVTP…YGAL), 313–333 (ITFI…WLLL), 341–361 (VLGT…DGIL), and 392–412 (IAIV…IVML).

Belongs to the unc-93 family.

Its subcellular location is the membrane. This chain is UNC93-like protein 3, found in Arabidopsis thaliana (Mouse-ear cress).